The chain runs to 371 residues: Histidinol-phosphate aminotransferase (371 aa).

Lys228 is subject to N6-(pyridoxal phosphate)lysine.

This sequence belongs to the class-II pyridoxal-phosphate-dependent aminotransferase family. Histidinol-phosphate aminotransferase subfamily. It depends on pyridoxal 5'-phosphate as a cofactor.

It carries out the reaction L-histidinol phosphate + 2-oxoglutarate = 3-(imidazol-4-yl)-2-oxopropyl phosphate + L-glutamate. Its pathway is amino-acid biosynthesis; L-histidine biosynthesis; L-histidine from 5-phospho-alpha-D-ribose 1-diphosphate: step 7/9. This is Histidinol-phosphate aminotransferase from Methanococcus maripaludis (strain C6 / ATCC BAA-1332).